The following is a 269-amino-acid chain: Ubiquinone/menaquinone biosynthesis C-methyltransferase UbiE (269 aa).

Residues threonine 92, aspartate 113, and 141–142 (NA) each bind S-adenosyl-L-methionine.

Belongs to the class I-like SAM-binding methyltransferase superfamily. MenG/UbiE family.

The catalysed reaction is a 2-demethylmenaquinol + S-adenosyl-L-methionine = a menaquinol + S-adenosyl-L-homocysteine + H(+). It carries out the reaction a 2-methoxy-6-(all-trans-polyprenyl)benzene-1,4-diol + S-adenosyl-L-methionine = a 5-methoxy-2-methyl-3-(all-trans-polyprenyl)benzene-1,4-diol + S-adenosyl-L-homocysteine + H(+). It participates in quinol/quinone metabolism; menaquinone biosynthesis; menaquinol from 1,4-dihydroxy-2-naphthoate: step 2/2. It functions in the pathway cofactor biosynthesis; ubiquinone biosynthesis. In terms of biological role, methyltransferase required for the conversion of demethylmenaquinol (DMKH2) to menaquinol (MKH2) and the conversion of 2-polyprenyl-6-methoxy-1,4-benzoquinol (DDMQH2) to 2-polyprenyl-3-methyl-6-methoxy-1,4-benzoquinol (DMQH2). The chain is Ubiquinone/menaquinone biosynthesis C-methyltransferase UbiE from Brucella canis (strain ATCC 23365 / NCTC 10854 / RM-666).